Here is an 859-residue protein sequence, read N- to C-terminus: Leucine--tRNA ligase (859 aa).

Residues P42–H52 carry the 'HIGH' region motif. Residues K618 to S622 carry the 'KMSKS' region motif. Position 621 (K621) interacts with ATP.

This sequence belongs to the class-I aminoacyl-tRNA synthetase family.

Its subcellular location is the cytoplasm. It carries out the reaction tRNA(Leu) + L-leucine + ATP = L-leucyl-tRNA(Leu) + AMP + diphosphate. In Shewanella sp. (strain W3-18-1), this protein is Leucine--tRNA ligase.